The primary structure comprises 308 residues: Endonuclease G, mitochondrial (308 aa).

His-148 (proton acceptor) is an active-site residue. Asn-180 contacts Mg(2+).

It belongs to the DNA/RNA non-specific endonuclease family. As to quaternary structure, homodimer; disulfide-linked. Interacts with crn-5, crn-4, crn-1 and cyn-13. Mg(2+) is required as a cofactor.

The protein resides in the mitochondrion. Its function is as follows. Endonuclease important for programmed cell death; it mediates apoptotic DNA fragmentation. This is Endonuclease G, mitochondrial (cps-6) from Caenorhabditis elegans.